The following is a 533-amino-acid chain: CTP synthase (533 aa).

Residues 1–268 (MGETKYIFVT…DETILQKMGL (268 aa)) are amidoligase domain. Residue Ser15 participates in CTP binding. Ser15 provides a ligand contact to UTP. 16 to 21 (SLGKGI) serves as a coordination point for ATP. Tyr56 is a binding site for L-glutamine. Residue Asp73 participates in ATP binding. Residues Asp73 and Glu143 each contribute to the Mg(2+) site. CTP is bound by residues 150-152 (DIE), 189-194 (KTKPTQ), and Lys225. Residues 189 to 194 (KTKPTQ) and Lys225 each bind UTP. Residues 301-533 (YVELQDAYKS…VSFIKAAIDK (233 aa)) enclose the Glutamine amidotransferase type-1 domain. Gly356 is an L-glutamine binding site. The active-site Nucleophile; for glutamine hydrolysis is Cys383. L-glutamine contacts are provided by residues 384 to 387 (LGMQ), Glu407, and Arg464. Active-site residues include His509 and Glu511.

The protein belongs to the CTP synthase family. As to quaternary structure, homotetramer.

It carries out the reaction UTP + L-glutamine + ATP + H2O = CTP + L-glutamate + ADP + phosphate + 2 H(+). It catalyses the reaction L-glutamine + H2O = L-glutamate + NH4(+). The catalysed reaction is UTP + NH4(+) + ATP = CTP + ADP + phosphate + 2 H(+). It participates in pyrimidine metabolism; CTP biosynthesis via de novo pathway; CTP from UDP: step 2/2. Its activity is regulated as follows. Allosterically activated by GTP, when glutamine is the substrate; GTP has no effect on the reaction when ammonia is the substrate. The allosteric effector GTP functions by stabilizing the protein conformation that binds the tetrahedral intermediate(s) formed during glutamine hydrolysis. Inhibited by the product CTP, via allosteric rather than competitive inhibition. Functionally, catalyzes the ATP-dependent amination of UTP to CTP with either L-glutamine or ammonia as the source of nitrogen. Regulates intracellular CTP levels through interactions with the four ribonucleotide triphosphates. This is CTP synthase from Bacteroides fragilis (strain YCH46).